Consider the following 236-residue polypeptide: Lectin (236 aa).

N-linked (GlcNAc...) asparagine glycosylation is present at Asn118.

The protein belongs to the leguminous lectin family. As to quaternary structure, homodimer of noncovalently associated chains.

D-mannose and D-glucose specific lectin. The sequence is that of Lectin from Onobrychis viciifolia (Common sainfoin).